A 655-amino-acid polypeptide reads, in one-letter code: T-lymphocyte surface antigen Ly-9 (655 aa).

The signal sequence occupies residues 1–47; the sequence is MVAPKSHTDDWAPGPFSSKPQRSQLQIFSSVLQTSLLFLLMGLRASG. The 111-residue stretch at 48–158 folds into the Ig-like V-type 1 domain; that stretch reads KDSAPTVVSG…FVYEQLQEPQ (111 aa). At 48–454 the chain is on the extracellular side; the sequence is KDSAPTVVSG…ICSGPERNTK (407 aa). N68, N95, N120, N169, and N173 each carry an N-linked (GlcNAc...) asparagine glycan. In terms of domain architecture, Ig-like C2-type 1 spans 159–235; the sequence is VTMKSVKVSE…NPVSQRSSLP (77 aa). 2 cysteine pairs are disulfide-bonded: C172–C242 and C178–C222. One can recognise an Ig-like V-type 2 domain in the interval 251-363; it reads GTTGETVVGV…LLIYRRLRKP (113 aa). N-linked (GlcNAc...) asparagine glycosylation is found at N285, N413, and N424. The region spanning 364 to 452 is the Ig-like C2-type 2 domain; it reads KITWSLRHSE…ENICSGPERN (89 aa). 2 disulfide bridges follow: C377/C446 and C383/C427. A helical membrane pass occupies residues 455–476; that stretch reads LWIGLFLMVCLLCVGIFSWCIW. Residues 477 to 655 lie on the Cytoplasmic side of the membrane; sequence KRKGRCSVPA…PESPTYENFT (179 aa). The tract at residues 521–556 is disordered; that stretch reads PLRPARQQPTPTSDSSSDSNLTTEEDEDRPEVHKPI. Residues 530-542 are compositionally biased toward low complexity; the sequence is TPTSDSSSDSNLT. Short sequence motifs (ITSM) lie at residues 601–606 and 624–629; these read TMYAQV and TIYCSI. Y603 carries the phosphotyrosine modification. Residues 633 to 655 form a disordered region; the sequence is QVVPPPQQNDLEIPESPTYENFT.

In terms of assembly, interacts with SH2D1A, SH2D1B and INPP5D. Interacts (via phosphorylated cytoplasmic domain) with PTPN11; the interaction is blocked by SH2D1A. In terms of tissue distribution, increased surface expression on T-cells of systemic lupus erythematosus (SLE) patients.

It localises to the membrane. The protein resides in the cell membrane. Self-ligand receptor of the signaling lymphocytic activation molecule (SLAM) family. SLAM receptors triggered by homo- or heterotypic cell-cell interactions are modulating the activation and differentiation of a wide variety of immune cells and thus are involved in the regulation and interconnection of both innate and adaptive immune response. Activities are controlled by presence or absence of small cytoplasmic adapter proteins, SH2D1A/SAP and/or SH2D1B/EAT-2. May participate in adhesion reactions between T lymphocytes and accessory cells by homophilic interaction. Promotes T-cell differentiation into a helper T-cell Th17 phenotype leading to increased IL-17 secretion; the costimulatory activity requires SH2D1A. Promotes recruitment of RORC to the IL-17 promoter. May be involved in the maintenance of peripheral cell tolerance by serving as a negative regulator of the immune response. May disable autoantibody responses and inhibit IFN-gamma secretion by CD4(+) T-cells. May negatively regulate the size of thymic innate CD8(+) T-cells and the development of invariant natural killer T (iNKT) cells. This chain is T-lymphocyte surface antigen Ly-9 (LY9), found in Homo sapiens (Human).